Here is a 146-residue protein sequence, read N- to C-terminus: MIWIFFVIALFLVTGLTLYAIRLLKQLKVQKELIAKAKNNRVIRLKESIDIIARAMQSGECNLSEGVMRLTMLLRPFGKNLSSYPAMANLYEVVRDMPTHDDRKLLEKRERMRLDLARESAEAQFEKNIKQELYILLEDIKSIELI.

A helical transmembrane segment spans residues 7 to 24 (VIALFLVTGLTLYAIRLL).

Its subcellular location is the membrane. This is an uncharacterized protein from Haemophilus influenzae (strain ATCC 51907 / DSM 11121 / KW20 / Rd).